The chain runs to 307 residues: Potassium channel subfamily K member 7 (307 aa).

The Cytoplasmic portion of the chain corresponds to M1–Y10. The helical transmembrane segment at G11 to L31 threads the bilayer. N83 carries N-linked (GlcNAc...) asparagine glycosylation. The pore-forming intramembrane region spans L92–K119. A helical transmembrane segment spans residues A120–L140. Residues R141 to Q170 are Cytoplasmic-facing. A helical membrane pass occupies residues A171–W191. The pore-forming intramembrane region spans L199–H227. Residues L233–V253 form a helical membrane-spanning segment. Residues E254 to C307 lie on the Cytoplasmic side of the membrane.

It belongs to the two pore domain potassium channel (TC 1.A.1.8) family. As to quaternary structure, homodimer.

Its subcellular location is the membrane. Functionally, probable potassium channel subunit. No channel activity observed in vitro as protein remains in the endoplasmic reticulum. May need to associate with an as yet unknown partner in order to reach the plasma membrane. This is Potassium channel subfamily K member 7 (KCNK7) from Homo sapiens (Human).